The chain runs to 87 residues: Xibalbin-2 (87 aa).

The N-terminal stretch at 1-25 is a signal peptide; the sequence is MKGVCTRKVLYFFMAVILFVAIVAS. The propeptide occupies 26 to 45; that stretch reads EDTENRNPAMAMPLQRMEQE.

Belongs to the xibalbin-2 family. Post-translationally, contains 5 disulfide bonds. Expressed by the venom gland. Not found in the whole body.

It localises to the secreted. Probable neurotoxin. Moderately inhibits voltage-gated potassium channels (Kv1.1/KCNA1, Kv1.2/KCNA2, Kv1.3/KCNA3, and Kv1.6/KCNA6, with the highest toxicity against Kv1.6 (73.2% inhibition at 1 uM)) and weakly inhibits sodium channels (Nav1.4/SCN4A). Does not activate protein kinase A type II (PKA-II) and MAP kinase Erk1/2 in sensory neurons. Does not show cytotoxic activity. Does not have an impact on Ca2+, cAMP, and NO signaling in the cell types analyzed. Does not interfere with the adhesion of leukocytes to endothelial cells. Functionally, moderately inhibits voltage-gated potassium channels (Kv1.1/KCNA1, Kv1.2/KCNA2, Kv1.3/KCNA3, and Kv1.6/KCNA6, with the highest toxicity against Kv1.6 (75.9% inhibition at 1 uM)). Does not activate protein kinase A type II (PKA-II) and MAP kinase Erk1/2 in sensory neurons. Does not show cytotoxic activity. Does not have an impact on Ca2+, cAMP, and NO signaling in the cell types analyzed. Does not interfere with the adhesion of leukocytes to endothelial cells. The sequence is that of Xibalbin-2 from Xibalbanus tulumensis (Blind cave remipede).